A 187-amino-acid polypeptide reads, in one-letter code: Large ribosomal subunit protein uL22 (187 aa).

The segment at 155–187 (DAVSRAAPTDDAPAKKKLSKKKLARQKEKMMRE) is disordered. The span at 169–178 (KKKLSKKKLA) shows a compositional bias: basic residues.

It belongs to the universal ribosomal protein uL22 family.

This is Large ribosomal subunit protein uL22 (RpL17) from Lonomia obliqua (Moth).